The primary structure comprises 273 residues: Dermonecrotic toxin LapSicTox-alphaIB1b2 (273 aa).

Residue His5 is part of the active site. Residues Glu25 and Asp27 each contribute to the Mg(2+) site. Residue His41 is the Nucleophile of the active site. Intrachain disulfides connect Cys45/Cys51 and Cys47/Cys190. A Mg(2+)-binding site is contributed by Asp85. Residue Asn250 is glycosylated (N-linked (GlcNAc...) asparagine).

Belongs to the arthropod phospholipase D family. Class II subfamily. Mg(2+) serves as cofactor. As to expression, expressed by the venom gland.

It is found in the secreted. The catalysed reaction is an N-(acyl)-sphingosylphosphocholine = an N-(acyl)-sphingosyl-1,3-cyclic phosphate + choline. It carries out the reaction an N-(acyl)-sphingosylphosphoethanolamine = an N-(acyl)-sphingosyl-1,3-cyclic phosphate + ethanolamine. It catalyses the reaction a 1-acyl-sn-glycero-3-phosphocholine = a 1-acyl-sn-glycero-2,3-cyclic phosphate + choline. The enzyme catalyses a 1-acyl-sn-glycero-3-phosphoethanolamine = a 1-acyl-sn-glycero-2,3-cyclic phosphate + ethanolamine. Dermonecrotic toxins cleave the phosphodiester linkage between the phosphate and headgroup of certain phospholipids (sphingolipid and lysolipid substrates), forming an alcohol (often choline) and a cyclic phosphate. This toxin acts on sphingomyelin (SM). It may also act on ceramide phosphoethanolamine (CPE), lysophosphatidylcholine (LPC) and lysophosphatidylethanolamine (LPE), but not on lysophosphatidylserine (LPS), and lysophosphatidylglycerol (LPG). It acts by transphosphatidylation, releasing exclusively cyclic phosphate products as second products. Induces dermonecrosis, hemolysis, increased vascular permeability, edema, inflammatory response, and platelet aggregation. This chain is Dermonecrotic toxin LapSicTox-alphaIB1b2, found in Loxosceles apachea (Apache recluse spider).